The primary structure comprises 405 residues: Macrolide efflux protein A (405 aa).

The next 11 membrane-spanning stretches (helical) occupy residues 14-34, 48-68, 76-98, 145-165, 168-188, 222-242, 259-279, 285-305, 310-330, 350-370, and 373-393; these read IWAGQAVSLITSAILQMAIIF, MASLLGFLPYAVFGPAIGVLV, IMIGADLIIAAAGSVLTIVAFYM, SLQSISYIVSPAVAALLYSVW, NAIIAIDVLGAVIASITVAIV, FALLLVGTLYMFVYMPINALF, ITEISFASGMLIGGLLLGLFG, ILLITASIFMMGISLTISGLL, FFIFVVCCAIMGLSVPFYSGV, LTGSIMSLAMPIGLILSALFA, and IGVNHWFLLSGTLIICIAIVC.

The protein belongs to the major facilitator superfamily. Drug:H(+) antiporter-3 (DHA3) (TC 2.A.1.21) family.

The protein localises to the cell membrane. Confers resistance to 14-membered macrolides including erythromycin and to 15-membered macrolides but not to 16-membered macrolides, lincosamides or analogs of streptogramin B. May function as an efflux pump to regulate intracellular macrolide levels. In Streptococcus pyogenes serotype M6 (strain ATCC BAA-946 / MGAS10394), this protein is Macrolide efflux protein A.